The primary structure comprises 343 residues: MRALVKTSPAPGLELTELPDPTPGANDIVVQVFRTGICGTDLHIDSWDEWAARTVPTPLVIGHEFAGEVVAVGSAVTQAQVGDFVSGEGHLVCGTCRNCRAGRRHLCANTRGLGVHHNGAFAEYAVLPEQNVWVHREHVDPDVAAIFDPFGNAVHTALTFPVVGEDVLITGAGPIGLMAACVARHAGARNVVITDVSEHRLELARRVGVDLAVNVAETGIADAQAKLGMSEGFDVAMEVSGQPSALRETIENMAHGGRIAMLGLPAERFQIDWSAVVLKMLTVKGIYGREMFETWYSMSVLLQSGLDLSPVITHRFPCTRHVEAFETARAGRCGKVILDWTVR.

C38 serves as a coordination point for Zn(2+). Catalysis depends on charge relay system residues T40 and H43. Zn(2+) is bound by residues H63, E64, C93, C96, C99, and C107. NAD(+) contacts are provided by residues I175, D195, R200, 262–264, and 286–287; these read LGL and IY.

The protein belongs to the zinc-containing alcohol dehydrogenase family. Homotetramer. The cofactor is Zn(2+).

The protein resides in the cytoplasm. It carries out the reaction L-threonine + NAD(+) = (2S)-2-amino-3-oxobutanoate + NADH + H(+). The protein operates within amino-acid degradation; L-threonine degradation via oxydo-reductase pathway; glycine from L-threonine: step 1/2. Functionally, catalyzes the NAD(+)-dependent oxidation of L-threonine to 2-amino-3-ketobutyrate. The polypeptide is L-threonine 3-dehydrogenase (Saccharopolyspora erythraea (strain ATCC 11635 / DSM 40517 / JCM 4748 / NBRC 13426 / NCIMB 8594 / NRRL 2338)).